The sequence spans 138 residues: Large ribosomal subunit protein uL16 (138 aa).

The span at 1 to 19 shows a compositional bias: basic residues; it reads MLIPRRVKHRKQHHPKRSG. The tract at residues 1–24 is disordered; the sequence is MLIPRRVKHRKQHHPKRSGAAKGG.

This sequence belongs to the universal ribosomal protein uL16 family. Part of the 50S ribosomal subunit.

Functionally, binds 23S rRNA and is also seen to make contacts with the A and possibly P site tRNAs. The chain is Large ribosomal subunit protein uL16 from Micrococcus luteus (strain ATCC 4698 / DSM 20030 / JCM 1464 / CCM 169 / CCUG 5858 / IAM 1056 / NBRC 3333 / NCIMB 9278 / NCTC 2665 / VKM Ac-2230) (Micrococcus lysodeikticus).